The primary structure comprises 570 residues: Membrane protein insertase YidC (570 aa).

A compositionally biased stretch (polar residues) spans 31 to 60 (QQPVAQTPSVTIDSNGADSSALLNSPNTGE). The tract at residues 31 to 79 (QQPVAQTPSVTIDSNGADSSALLNSPNTGELDTPETASKPATAEDSNIS) is disordered. 5 consecutive transmembrane segments (helical) span residues 230 to 250 (PTFSGGFGAASFLGAVVSTPE), 378 to 398 (WGIAIILLTVLIKALFFHLSA), 444 to 464 (LGGCLPMLVQMPVFISLYWVL), 487 to 507 (PYFVLPLLMGAAMFLQTSLNP), and 522 to 542 (PIIFTVFFLWFPAGLVLYWLV).

This sequence belongs to the OXA1/ALB3/YidC family. Type 1 subfamily. In terms of assembly, interacts with the Sec translocase complex via SecD. Specifically interacts with transmembrane segments of nascent integral membrane proteins during membrane integration.

The protein localises to the cell inner membrane. Functionally, required for the insertion and/or proper folding and/or complex formation of integral membrane proteins into the membrane. Involved in integration of membrane proteins that insert both dependently and independently of the Sec translocase complex, as well as at least some lipoproteins. Aids folding of multispanning membrane proteins. The polypeptide is Membrane protein insertase YidC (Hahella chejuensis (strain KCTC 2396)).